Reading from the N-terminus, the 462-residue chain is Anthranilate synthase component 1 (462 aa).

L-tryptophan-binding positions include Ser-46 and 243–245; that span reads PHM. 278-279 contributes to the chorismate binding site; sequence GT. Glu-305 contributes to the Mg(2+) binding site. Chorismate-binding positions include Tyr-394, Arg-414, 428-430, and Gly-430; that span reads SGG. Mg(2+) is bound at residue Glu-444.

The protein belongs to the anthranilate synthase component I family. Heterotetramer consisting of two non-identical subunits: a beta subunit (TrpG) and a large alpha subunit (TrpE). Mg(2+) is required as a cofactor.

It carries out the reaction chorismate + L-glutamine = anthranilate + pyruvate + L-glutamate + H(+). The protein operates within amino-acid biosynthesis; L-tryptophan biosynthesis; L-tryptophan from chorismate: step 1/5. Feedback inhibited by tryptophan. In terms of biological role, part of a heterotetrameric complex that catalyzes the two-step biosynthesis of anthranilate, an intermediate in the biosynthesis of L-tryptophan. In the first step, the glutamine-binding beta subunit (TrpG) of anthranilate synthase (AS) provides the glutamine amidotransferase activity which generates ammonia as a substrate that, along with chorismate, is used in the second step, catalyzed by the large alpha subunit of AS (TrpE) to produce anthranilate. In the absence of TrpG, TrpE can synthesize anthranilate directly from chorismate and high concentrations of ammonia. The chain is Anthranilate synthase component 1 (trpE) from Leptospira biflexa.